Consider the following 269-residue polypeptide: Regulating synaptic membrane exocytosis protein 4 (269 aa).

The C2 domain occupies 115 to 233 (PMGGVEIGLQ…DLTTLAVGWY (119 aa)). Phosphoserine is present on residues Ser-254 and Ser-257.

Binds PPFIA3. As to expression, brain specific.

The protein localises to the synapse. Its function is as follows. Regulates synaptic membrane exocytosis. The chain is Regulating synaptic membrane exocytosis protein 4 (Rims4) from Rattus norvegicus (Rat).